Reading from the N-terminus, the 239-residue chain is Proteasome activator complex subunit 2 (239 aa).

A2 carries the N-acetylalanine modification. Phosphoserine is present on S10. The segment at D65 to K86 is disordered. Residues P72–K86 show a composition bias toward basic and acidic residues.

Belongs to the PA28 family. In terms of assembly, heterodimer of PSME1 and PSME2, which forms a hexameric ring.

Functionally, implicated in immunoproteasome assembly and required for efficient antigen processing. The PA28 activator complex enhances the generation of class I binding peptides by altering the cleavage pattern of the proteasome. This chain is Proteasome activator complex subunit 2 (PSME2), found in Bos taurus (Bovine).